The following is a 420-amino-acid chain: Serine hydroxymethyltransferase (420 aa).

Residues L121 and 125–127 (GHL) each bind (6S)-5,6,7,8-tetrahydrofolate. K230 is modified (N6-(pyridoxal phosphate)lysine). Residues E246 and 354–356 (SPF) contribute to the (6S)-5,6,7,8-tetrahydrofolate site.

This sequence belongs to the SHMT family. Homodimer. Pyridoxal 5'-phosphate serves as cofactor.

It is found in the cytoplasm. The enzyme catalyses (6R)-5,10-methylene-5,6,7,8-tetrahydrofolate + glycine + H2O = (6S)-5,6,7,8-tetrahydrofolate + L-serine. The protein operates within one-carbon metabolism; tetrahydrofolate interconversion. Its pathway is amino-acid biosynthesis; glycine biosynthesis; glycine from L-serine: step 1/1. Functionally, catalyzes the reversible interconversion of serine and glycine with tetrahydrofolate (THF) serving as the one-carbon carrier. This reaction serves as the major source of one-carbon groups required for the biosynthesis of purines, thymidylate, methionine, and other important biomolecules. Also exhibits THF-independent aldolase activity toward beta-hydroxyamino acids, producing glycine and aldehydes, via a retro-aldol mechanism. This Rickettsia canadensis (strain McKiel) protein is Serine hydroxymethyltransferase.